A 559-amino-acid chain; its full sequence is Nicotinate phosphoribosyltransferase 1 (559 aa).

Nicotinate contacts are provided by Tyr-33 and Thr-221. A Phosphohistidine modification is found at His-224. Position 331 (Arg-331) interacts with nicotinate. Thr-393 contacts 5-phospho-alpha-D-ribose 1-diphosphate.

The protein belongs to the NAPRTase family. The cofactor is Mg(2+). Requires Mn(2+) as cofactor. Transiently phosphorylated on a His residue during the reaction cycle. Phosphorylation strongly increases the affinity for substrates and increases the rate of nicotinate D-ribonucleotide production. Dephosphorylation regenerates the low-affinity form of the enzyme, leading to product release.

The catalysed reaction is nicotinate + 5-phospho-alpha-D-ribose 1-diphosphate + ATP + H2O = nicotinate beta-D-ribonucleotide + ADP + phosphate + diphosphate. It participates in cofactor biosynthesis; NAD(+) biosynthesis; nicotinate D-ribonucleotide from nicotinate: step 1/1. Functionally, catalyzes the first step in the biosynthesis of NAD from nicotinic acid, the ATP-dependent synthesis of beta-nicotinate D-ribonucleotide from nicotinate and 5-phospho-D-ribose 1-phosphate. Helps prevent cellular oxidative stress via its role in NAD biosynthesis. In Arabidopsis thaliana (Mouse-ear cress), this protein is Nicotinate phosphoribosyltransferase 1.